A 99-amino-acid polypeptide reads, in one-letter code: Large ribosomal subunit protein uL23 (99 aa).

This sequence belongs to the universal ribosomal protein uL23 family. In terms of assembly, part of the 50S ribosomal subunit. Contacts protein L29, and trigger factor when it is bound to the ribosome.

Its function is as follows. One of the early assembly proteins it binds 23S rRNA. One of the proteins that surrounds the polypeptide exit tunnel on the outside of the ribosome. Forms the main docking site for trigger factor binding to the ribosome. This Pseudomonas aeruginosa (strain LESB58) protein is Large ribosomal subunit protein uL23.